Consider the following 243-residue polypeptide: UDP-2,3-diacylglucosamine hydrolase (243 aa).

Residues aspartate 9, histidine 11, aspartate 42, asparagine 79, and histidine 114 each contribute to the Mn(2+) site. 79 to 80 (NR) is a binding site for substrate. The substrate site is built by aspartate 122, serine 160, asparagine 164, and histidine 195. The Mn(2+) site is built by histidine 195 and histidine 197.

It belongs to the LpxH family. Mn(2+) is required as a cofactor.

It localises to the cell inner membrane. The enzyme catalyses UDP-2-N,3-O-bis[(3R)-3-hydroxytetradecanoyl]-alpha-D-glucosamine + H2O = 2-N,3-O-bis[(3R)-3-hydroxytetradecanoyl]-alpha-D-glucosaminyl 1-phosphate + UMP + 2 H(+). It participates in glycolipid biosynthesis; lipid IV(A) biosynthesis; lipid IV(A) from (3R)-3-hydroxytetradecanoyl-[acyl-carrier-protein] and UDP-N-acetyl-alpha-D-glucosamine: step 4/6. Its function is as follows. Hydrolyzes the pyrophosphate bond of UDP-2,3-diacylglucosamine to yield 2,3-diacylglucosamine 1-phosphate (lipid X) and UMP by catalyzing the attack of water at the alpha-P atom. Involved in the biosynthesis of lipid A, a phosphorylated glycolipid that anchors the lipopolysaccharide to the outer membrane of the cell. The polypeptide is UDP-2,3-diacylglucosamine hydrolase (Coxiella burnetii (strain Dugway 5J108-111)).